We begin with the raw amino-acid sequence, 347 residues long: 4-hydroxy-2-oxovalerate aldolase 2 (347 aa).

A Pyruvate carboxyltransferase domain is found at 7–259; the sequence is VRITDTSLRD…KTGIDFFDIA (253 aa). 15 to 16 serves as a coordination point for substrate; the sequence is RD. Asp-16 lines the Mn(2+) pocket. His-19 functions as the Proton acceptor in the catalytic mechanism. Substrate contacts are provided by Ser-169 and His-198. The Mn(2+) site is built by His-198 and His-200. Position 289 (Tyr-289) interacts with substrate.

Belongs to the 4-hydroxy-2-oxovalerate aldolase family.

The enzyme catalyses (S)-4-hydroxy-2-oxopentanoate = acetaldehyde + pyruvate. The polypeptide is 4-hydroxy-2-oxovalerate aldolase 2 (Mycobacterium marinum (strain ATCC BAA-535 / M)).